The sequence spans 190 residues: TATA box-binding protein-like 1 (190 aa).

The protein belongs to the TBP family. In terms of assembly, binds TFIIA and TFIIB.

The protein resides in the cytoplasm. It localises to the nucleus. Functionally, part of a specialized transcription system that mediates the transcription of most ribosomal proteins through the 5'-TCT-3' motif which is a core promoter element at these genes. Seems to also mediate the transcription of NF1. Does not bind the TATA box. This is TATA box-binding protein-like 1 (TBPL1) from Pongo abelii (Sumatran orangutan).